A 344-amino-acid chain; its full sequence is Uroporphyrinogen decarboxylase (344 aa).

Substrate-binding positions include 23-27 (RQAGR), Asp73, Tyr149, Thr204, and His321.

This sequence belongs to the uroporphyrinogen decarboxylase family. In terms of assembly, homodimer.

The protein localises to the cytoplasm. It catalyses the reaction uroporphyrinogen III + 4 H(+) = coproporphyrinogen III + 4 CO2. It participates in porphyrin-containing compound metabolism; protoporphyrin-IX biosynthesis; coproporphyrinogen-III from 5-aminolevulinate: step 4/4. Functionally, catalyzes the decarboxylation of four acetate groups of uroporphyrinogen-III to yield coproporphyrinogen-III. In Francisella tularensis subsp. tularensis (strain FSC 198), this protein is Uroporphyrinogen decarboxylase.